The following is a 216-amino-acid chain: MSPSPEQVMQFLYALRSRGVRDRAVLTAMEKIDRGLFVEGVFSGRAYEDVPLPIACGQTISQPSIVGLMTQAAEIGPRHHVLEVGTGAGYQAAILSQLARRVWTVDRHRRLTRAAEARFKALDLTNVTVLTGDGSFGLPDQAPFDRILVTAAAEDPPGPLLAQLREGGIMVVPVGQSDAVQSLIKVTRTESGFDYEEMRSVRFVPLVEGIAPENSA.

The active site involves Ser61.

Belongs to the methyltransferase superfamily. L-isoaspartyl/D-aspartyl protein methyltransferase family.

It localises to the cytoplasm. The enzyme catalyses [protein]-L-isoaspartate + S-adenosyl-L-methionine = [protein]-L-isoaspartate alpha-methyl ester + S-adenosyl-L-homocysteine. Its function is as follows. Catalyzes the methyl esterification of L-isoaspartyl residues in peptides and proteins that result from spontaneous decomposition of normal L-aspartyl and L-asparaginyl residues. It plays a role in the repair and/or degradation of damaged proteins. In Dinoroseobacter shibae (strain DSM 16493 / NCIMB 14021 / DFL 12), this protein is Protein-L-isoaspartate O-methyltransferase.